The following is a 333-amino-acid chain: uncharacterized protein (333 aa).

The protein to E.coli YfeH.

This is an uncharacterized protein from Pseudomonas aeruginosa (strain ATCC 15692 / DSM 22644 / CIP 104116 / JCM 14847 / LMG 12228 / 1C / PRS 101 / PAO1).